The sequence spans 202 residues: Transmembrane gamma-carboxyglutamic acid protein 2 (202 aa).

A signal peptide spans Met1–Ser23. A propeptide spanning residues Glu24–Arg49 is cleaved from the precursor. Positions Ala50–Tyr96 constitute a Gla domain. Residues Ala50–Ser109 lie on the Extracellular side of the membrane. Cys67 and Cys72 are joined by a disulfide. Glu70 bears the 4-carboxyglutamate mark. A helical membrane pass occupies residues Leu110–Trp130. The Cytoplasmic portion of the chain corresponds to Tyr131 to His202. The segment at Cys143–His202 is disordered. Positions Pro158–Leu175 are enriched in pro residues. Positions Leu175–Tyr178 match the LPXY motif; mediates binding to WW domain-containing proteins motif. Residues Pro192–Tyr195 carry the PPXY motif; mediates binding to WW domain-containing proteins motif.

Interacts with NEDD4. Interacts (via cytoplasmic domain) with transcriptional coactivator YAP1. Post-translationally, gamma-carboxyglutamate residues are formed by vitamin K dependent carboxylation. These residues are essential for the binding of calcium. As to expression, widely expressed with highest levels in kidney. Also highly expressed in the thyroid.

It localises to the cell membrane. The protein is Transmembrane gamma-carboxyglutamic acid protein 2 of Homo sapiens (Human).